Consider the following 408-residue polypeptide: Peptidase T (408 aa).

Histidine 79 provides a ligand contact to Zn(2+). Aspartate 81 is a catalytic residue. Residue aspartate 139 participates in Zn(2+) binding. Residue glutamate 173 is the Proton acceptor of the active site. Residues glutamate 174, aspartate 196, and histidine 378 each coordinate Zn(2+).

This sequence belongs to the peptidase M20B family. The cofactor is Zn(2+).

It is found in the cytoplasm. It catalyses the reaction Release of the N-terminal residue from a tripeptide.. Its function is as follows. Cleaves the N-terminal amino acid of tripeptides. In Shouchella clausii (strain KSM-K16) (Alkalihalobacillus clausii), this protein is Peptidase T.